The chain runs to 233 residues: Antilisterial bacteriocin subtilosin biosynthesis protein AlbG (233 aa).

The next 5 helical transmembrane spans lie at 4 to 24, 46 to 66, 116 to 136, 145 to 165, and 192 to 212; these read STVF…FGWV, GLLA…LHYV, TYVM…FEIV, TPPI…LFYM, and IGWM…LAAI.

The protein resides in the cell membrane. Its function is as follows. Involved in the production of the bacteriocin subtilosin. This is Antilisterial bacteriocin subtilosin biosynthesis protein AlbG (albG) from Bacillus subtilis.